The following is a 257-amino-acid chain: Imidazole glycerol phosphate synthase subunit HisF (257 aa).

Catalysis depends on residues Asp-11 and Asp-130.

The protein belongs to the HisA/HisF family. Heterodimer of HisH and HisF.

Its subcellular location is the cytoplasm. The enzyme catalyses 5-[(5-phospho-1-deoxy-D-ribulos-1-ylimino)methylamino]-1-(5-phospho-beta-D-ribosyl)imidazole-4-carboxamide + L-glutamine = D-erythro-1-(imidazol-4-yl)glycerol 3-phosphate + 5-amino-1-(5-phospho-beta-D-ribosyl)imidazole-4-carboxamide + L-glutamate + H(+). Its pathway is amino-acid biosynthesis; L-histidine biosynthesis; L-histidine from 5-phospho-alpha-D-ribose 1-diphosphate: step 5/9. In terms of biological role, IGPS catalyzes the conversion of PRFAR and glutamine to IGP, AICAR and glutamate. The HisF subunit catalyzes the cyclization activity that produces IGP and AICAR from PRFAR using the ammonia provided by the HisH subunit. The polypeptide is Imidazole glycerol phosphate synthase subunit HisF (Vibrio cholerae serotype O1 (strain ATCC 39541 / Classical Ogawa 395 / O395)).